The following is a 914-amino-acid chain: Protein translocase subunit SecA (914 aa).

ATP-binding positions include Gln-87, 105-109 (GEGKT), and Asp-500. 4 residues coordinate Zn(2+): Cys-898, Cys-900, Cys-909, and His-910.

This sequence belongs to the SecA family. In terms of assembly, monomer and homodimer. Part of the essential Sec protein translocation apparatus which comprises SecA, SecYEG and auxiliary proteins SecDF-YajC and YidC. Zn(2+) is required as a cofactor.

It is found in the cell inner membrane. The protein localises to the cytoplasm. It catalyses the reaction ATP + H2O + cellular proteinSide 1 = ADP + phosphate + cellular proteinSide 2.. In terms of biological role, part of the Sec protein translocase complex. Interacts with the SecYEG preprotein conducting channel. Has a central role in coupling the hydrolysis of ATP to the transfer of proteins into and across the cell membrane, serving as an ATP-driven molecular motor driving the stepwise translocation of polypeptide chains across the membrane. In Acidithiobacillus ferrooxidans (strain ATCC 23270 / DSM 14882 / CIP 104768 / NCIMB 8455) (Ferrobacillus ferrooxidans (strain ATCC 23270)), this protein is Protein translocase subunit SecA.